The following is an 88-amino-acid chain: Ribonuclease P protein component 1 (88 aa).

The protein belongs to the eukaryotic/archaeal RNase P protein component 1 family. In terms of assembly, consists of a catalytic RNA component and at least 4-5 protein subunits.

It localises to the cytoplasm. The catalysed reaction is Endonucleolytic cleavage of RNA, removing 5'-extranucleotides from tRNA precursor.. Part of ribonuclease P, a protein complex that generates mature tRNA molecules by cleaving their 5'-ends. The protein is Ribonuclease P protein component 1 of Nitrosopumilus maritimus (strain SCM1).